A 147-amino-acid polypeptide reads, in one-letter code: Allograft inflammatory factor 1 (147 aa).

Ser-2 is modified (N-acetylserine). Lys-11 bears the N6-acetyllysine mark. Ser-39 carries the post-translational modification Phosphoserine. The region spanning 45–80 is the EF-hand 1 domain; it reads SKLEAFKTKYMEFDLNGNGDIDIMSLKRMLEKLGVP. 7 residues coordinate Ca(2+): Asp-58, Asn-60, Asn-62, Asp-64, Glu-98, Thr-100, and Asp-105. The EF-hand 2; degenerate domain maps to 81-115; that stretch reads KTHLELKKLIREVSSGSEETFSYSDFLRMMLGKRS. Positions 127–147 are disordered; the sequence is KNKEHQKPTGPPAKKAISELP.

As to quaternary structure, homodimer (Potential). Monomer. Interacts with LCP1. In terms of tissue distribution, cardiac allograft, spleen and testis. Expressed by inflammatory cells (macrophages and neutrophils).

The protein localises to the cytoplasm. It is found in the cytoskeleton. It localises to the cell projection. Its subcellular location is the ruffle membrane. The protein resides in the phagocytic cup. In terms of biological role, actin-binding protein that enhances membrane ruffling and RAC activation. Enhances the actin-bundling activity of LCP1. Binds calcium. Plays a role in RAC signaling and in phagocytosis. May play an role in macrophage activation and function. Promotes the proliferation of vascular smooth muscle cells and of T-lymphocytes. Enhances lymphocyte migration. Plays a role in vascular inflammation. The chain is Allograft inflammatory factor 1 (Aif1) from Rattus norvegicus (Rat).